The primary structure comprises 197 residues: Ribosomal RNA large subunit methyltransferase E (197 aa).

Residues Gly-50, Trp-52, Asp-70, Asp-88, and Asp-111 each contribute to the S-adenosyl-L-methionine site. Lys-151 serves as the catalytic Proton acceptor.

It belongs to the class I-like SAM-binding methyltransferase superfamily. RNA methyltransferase RlmE family.

It is found in the cytoplasm. The enzyme catalyses uridine(2552) in 23S rRNA + S-adenosyl-L-methionine = 2'-O-methyluridine(2552) in 23S rRNA + S-adenosyl-L-homocysteine + H(+). Its function is as follows. Specifically methylates the uridine in position 2552 of 23S rRNA at the 2'-O position of the ribose in the fully assembled 50S ribosomal subunit. This chain is Ribosomal RNA large subunit methyltransferase E, found in Syntrophobacter fumaroxidans (strain DSM 10017 / MPOB).